Reading from the N-terminus, the 424-residue chain is Riboflavin biosynthesis protein RibBA (424 aa).

Residues 1–206 are DHBP synthase; sequence MFTCEAGIAS…VDDLITYRYT (206 aa). D-ribulose 5-phosphate-binding positions include 32–33, Asp-37, 145–149, and Glu-169; these read RE and RPGHT. Residue Glu-33 participates in Mg(2+) binding. His-148 is a binding site for Mg(2+). The GTP cyclohydrolase II stretch occupies residues 207–424; the sequence is YDSLVTKISS…YETVERMSCR (218 aa). 257-261 contacts GTP; that stretch reads RVHSE. Residues Cys-262, Cys-273, and Cys-275 each coordinate Zn(2+). GTP contacts are provided by residues Gln-278, 301-303, and Thr-323; that span reads EGR. Asp-335 acts as the Proton acceptor; for GTP cyclohydrolase activity in catalysis. Catalysis depends on Arg-337, which acts as the Nucleophile; for GTP cyclohydrolase activity. Residues Thr-358 and Lys-363 each contribute to the GTP site.

It in the N-terminal section; belongs to the DHBP synthase family. In the C-terminal section; belongs to the GTP cyclohydrolase II family. Mg(2+) is required as a cofactor. Requires Mn(2+) as cofactor. The cofactor is Zn(2+).

The enzyme catalyses D-ribulose 5-phosphate = (2S)-2-hydroxy-3-oxobutyl phosphate + formate + H(+). It carries out the reaction GTP + 4 H2O = 2,5-diamino-6-hydroxy-4-(5-phosphoribosylamino)-pyrimidine + formate + 2 phosphate + 3 H(+). The protein operates within cofactor biosynthesis; riboflavin biosynthesis; 2-hydroxy-3-oxobutyl phosphate from D-ribulose 5-phosphate: step 1/1. It participates in cofactor biosynthesis; riboflavin biosynthesis; 5-amino-6-(D-ribitylamino)uracil from GTP: step 1/4. Its function is as follows. Catalyzes the conversion of D-ribulose 5-phosphate to formate and 3,4-dihydroxy-2-butanone 4-phosphate. Functionally, catalyzes the conversion of GTP to 2,5-diamino-6-ribosylamino-4(3H)-pyrimidinone 5'-phosphate (DARP), formate and pyrophosphate. This is Riboflavin biosynthesis protein RibBA from Chlamydia trachomatis serovar D (strain ATCC VR-885 / DSM 19411 / UW-3/Cx).